We begin with the raw amino-acid sequence, 448 residues long: Probable glycine dehydrogenase (decarboxylating) subunit 1 (448 aa).

The protein belongs to the GcvP family. N-terminal subunit subfamily. As to quaternary structure, the glycine cleavage system is composed of four proteins: P, T, L and H. In this organism, the P 'protein' is a heterodimer of two subunits.

It carries out the reaction N(6)-[(R)-lipoyl]-L-lysyl-[glycine-cleavage complex H protein] + glycine + H(+) = N(6)-[(R)-S(8)-aminomethyldihydrolipoyl]-L-lysyl-[glycine-cleavage complex H protein] + CO2. Functionally, the glycine cleavage system catalyzes the degradation of glycine. The P protein binds the alpha-amino group of glycine through its pyridoxal phosphate cofactor; CO(2) is released and the remaining methylamine moiety is then transferred to the lipoamide cofactor of the H protein. In Bacillus subtilis (strain 168), this protein is Probable glycine dehydrogenase (decarboxylating) subunit 1 (gcvPA).